A 208-amino-acid polypeptide reads, in one-letter code: Probable hydrolase YcaC (208 aa).

The active site involves Cys118.

As to quaternary structure, homooctamer composed of two tetrameric rings.

The polypeptide is Probable hydrolase YcaC (ycaC) (Escherichia coli (strain K12)).